We begin with the raw amino-acid sequence, 152 residues long: Acidic phospholipase A2 homolog taipoxin gamma chain (152 aa).

The signal sequence occupies residues 1-19 (MHPAHLLVLLAVCVSLLGS). Cystine bridges form between cysteine 38-cysteine 104, cysteine 42-cysteine 46, cysteine 54-cysteine 151, cysteine 56-cysteine 72, cysteine 71-cysteine 132, cysteine 78-cysteine 125, cysteine 88-cysteine 118, and cysteine 111-cysteine 123. Asparagine 97 carries N-linked (GlcNAc...) asparagine glycosylation.

The protein belongs to the phospholipase A2 family. Group I subfamily. D49 sub-subfamily. Heterotrimer of alpha, beta, and gamma chains; non-covalently linked. In terms of processing, contains 0.9% fucose, 2.2% mannose, 4.2% N-acetyl-D-glucosamine, 3.5% galactose, and 3.8% N-acetyl-neuraminic acid (sialic acid). Expressed by the venom gland.

Its subcellular location is the secreted. Its function is as follows. Heterotrimer: Snake venom phospholipase A2 (PLA2) heterotrimer that acts as a potent presynaptic neurotoxin by blocking synaptic transmission and synaptic vesicle recycling. May act by binding in a calcium-dependent fashion to neurotonal pentraxin-1 (NPTX1) and neurotonal pentraxin-2 (NPTX2), but not to neuronal pentraxin receptor (NPTXR). Also binds to taipoxin-associated calcium binding protein 49 (RCN2), a protein localized in the lumen of endoplasmic reticulum. Monomer (gamma chain): Snake venom phospholipase A2 homolog that is neither toxic nor enzymatically active. Does not bind calcium. This chain is Acidic phospholipase A2 homolog taipoxin gamma chain, found in Oxyuranus scutellatus scutellatus (Australian taipan).